The chain runs to 397 residues: Tryptophan synthase beta chain (397 aa).

At Lys-88 the chain carries N6-(pyridoxal phosphate)lysine.

The protein belongs to the TrpB family. Tetramer of two alpha and two beta chains. Requires pyridoxal 5'-phosphate as cofactor.

It carries out the reaction (1S,2R)-1-C-(indol-3-yl)glycerol 3-phosphate + L-serine = D-glyceraldehyde 3-phosphate + L-tryptophan + H2O. Its pathway is amino-acid biosynthesis; L-tryptophan biosynthesis; L-tryptophan from chorismate: step 5/5. Functionally, the beta subunit is responsible for the synthesis of L-tryptophan from indole and L-serine. The protein is Tryptophan synthase beta chain of Shewanella amazonensis (strain ATCC BAA-1098 / SB2B).